The following is a 287-amino-acid chain: Ribosomal RNA small subunit methyltransferase A (287 aa).

S-adenosyl-L-methionine is bound by residues N18, L20, G45, E66, D91, and N118.

It belongs to the class I-like SAM-binding methyltransferase superfamily. rRNA adenine N(6)-methyltransferase family. RsmA subfamily.

The protein resides in the cytoplasm. It catalyses the reaction adenosine(1518)/adenosine(1519) in 16S rRNA + 4 S-adenosyl-L-methionine = N(6)-dimethyladenosine(1518)/N(6)-dimethyladenosine(1519) in 16S rRNA + 4 S-adenosyl-L-homocysteine + 4 H(+). Specifically dimethylates two adjacent adenosines (A1518 and A1519) in the loop of a conserved hairpin near the 3'-end of 16S rRNA in the 30S particle. May play a critical role in biogenesis of 30S subunits. This Haemophilus influenzae (strain PittEE) protein is Ribosomal RNA small subunit methyltransferase A.